Reading from the N-terminus, the 351-residue chain is Heat shock factor protein HSF30 (351 aa).

The DNA-binding element occupies 29–123 (PPPFLSKTYE…LLKTIKRRRN (95 aa)).

This sequence belongs to the HSF family. In terms of assembly, homotrimer. Post-translationally, exhibits temperature-dependent phosphorylation.

The protein localises to the nucleus. In terms of biological role, DNA-binding protein that specifically binds heat shock promoter elements (HSE) and activates transcription. The protein is Heat shock factor protein HSF30 (HSF30) of Solanum peruvianum (Peruvian tomato).